Here is a 911-residue protein sequence, read N- to C-terminus: Isoleucine--tRNA ligase (911 aa).

The short motif at 57-67 is the 'HIGH' region element; it reads PYANGHIHIGH. Position 564 (Glu-564) interacts with L-isoleucyl-5'-AMP. The short motif at 605–609 is the 'KMSKS' region element; it reads KMSKS. Position 608 (Lys-608) interacts with ATP. Positions 887, 890, 902, and 905 each coordinate Zn(2+).

It belongs to the class-I aminoacyl-tRNA synthetase family. IleS type 1 subfamily. In terms of assembly, monomer. Requires Zn(2+) as cofactor.

The protein resides in the cytoplasm. It catalyses the reaction tRNA(Ile) + L-isoleucine + ATP = L-isoleucyl-tRNA(Ile) + AMP + diphosphate. In terms of biological role, catalyzes the attachment of isoleucine to tRNA(Ile). As IleRS can inadvertently accommodate and process structurally similar amino acids such as valine, to avoid such errors it has two additional distinct tRNA(Ile)-dependent editing activities. One activity is designated as 'pretransfer' editing and involves the hydrolysis of activated Val-AMP. The other activity is designated 'posttransfer' editing and involves deacylation of mischarged Val-tRNA(Ile). The protein is Isoleucine--tRNA ligase of Nautilia profundicola (strain ATCC BAA-1463 / DSM 18972 / AmH).